We begin with the raw amino-acid sequence, 146 residues long: 3-hydroxyacyl-[acyl-carrier-protein] dehydratase FabZ (146 aa).

His-47 is an active-site residue.

The protein belongs to the thioester dehydratase family. FabZ subfamily.

The protein localises to the cytoplasm. It catalyses the reaction a (3R)-hydroxyacyl-[ACP] = a (2E)-enoyl-[ACP] + H2O. Involved in unsaturated fatty acids biosynthesis. Catalyzes the dehydration of short chain beta-hydroxyacyl-ACPs and long chain saturated and unsaturated beta-hydroxyacyl-ACPs. The chain is 3-hydroxyacyl-[acyl-carrier-protein] dehydratase FabZ from Nitrosospira multiformis (strain ATCC 25196 / NCIMB 11849 / C 71).